Reading from the N-terminus, the 100-residue chain is Large ribosomal subunit protein uL23 (100 aa).

It belongs to the universal ribosomal protein uL23 family. As to quaternary structure, part of the 50S ribosomal subunit. Contacts protein L29, and trigger factor when it is bound to the ribosome.

One of the early assembly proteins it binds 23S rRNA. One of the proteins that surrounds the polypeptide exit tunnel on the outside of the ribosome. Forms the main docking site for trigger factor binding to the ribosome. The polypeptide is Large ribosomal subunit protein uL23 (Mycobacterium leprae (strain Br4923)).